The primary structure comprises 210 residues: Probable GTP-binding protein EngB (210 aa).

Residues 24–199 (QGCEVAFAGR…WEVLGRWLDL (176 aa)) enclose the EngB-type G domain. GTP is bound by residues 32–39 (GRSNAGKS), 59–63 (GRTRM), 77–80 (DLPG), 144–147 (TKSD), and 178–180 (FSS). Mg(2+)-binding residues include serine 39 and threonine 61.

It belongs to the TRAFAC class TrmE-Era-EngA-EngB-Septin-like GTPase superfamily. EngB GTPase family. Mg(2+) serves as cofactor.

Its function is as follows. Necessary for normal cell division and for the maintenance of normal septation. The chain is Probable GTP-binding protein EngB from Methylococcus capsulatus (strain ATCC 33009 / NCIMB 11132 / Bath).